Here is a 276-residue protein sequence, read N- to C-terminus: Beta-lactamase OXA-1 (276 aa).

The signal sequence occupies residues 1–25 (MKNTIHINFAIFLIIANIIYSSASA). Ser-71 acts as the Acyl-ester intermediate in catalysis. Ser-71, Lys-74, Ser-118, Thr-216, and Ala-218 together coordinate a beta-lactam. Residue Lys-74 is modified to N6-carboxylysine.

This sequence belongs to the class-D beta-lactamase family. In terms of assembly, monomer.

It localises to the periplasm. The enzyme catalyses a beta-lactam + H2O = a substituted beta-amino acid. Inhibited by penicillin sulfones. Only weakly inhibited by clavulanic acid and sulbactam. Its function is as follows. Class D beta-lactamase which confers resistance to the beta-lactam antibiotics, including amoxicillin and ticarcillin. Acts via hydrolysis of the beta-lactam ring. Has penicillin- and cephalosporin-hydrolyzing activities. In Escherichia coli, this protein is Beta-lactamase OXA-1.